A 40-amino-acid chain; its full sequence is Alpha-1B-glycoprotein (40 aa).

A glycan (N-linked (GlcNAc...) asparagine) is linked at N23.

As to quaternary structure, interacts with CRISP3. Plasma.

Its subcellular location is the secreted. The polypeptide is Alpha-1B-glycoprotein (A1BG) (Sus scrofa (Pig)).